A 360-amino-acid polypeptide reads, in one-letter code: Protein RecA (360 aa).

77 to 84 (GPESSGKT) serves as a coordination point for ATP.

This sequence belongs to the RecA family.

Its subcellular location is the cytoplasm. Its function is as follows. Can catalyze the hydrolysis of ATP in the presence of single-stranded DNA, the ATP-dependent uptake of single-stranded DNA by duplex DNA, and the ATP-dependent hybridization of homologous single-stranded DNAs. It interacts with LexA causing its activation and leading to its autocatalytic cleavage. The chain is Protein RecA from Chelativorans sp. (strain BNC1).